We begin with the raw amino-acid sequence, 359 residues long: F-box protein At5g49610 (359 aa).

Residues 3 to 52 (NQKGALFPDEVILQILARLPVKSLFRFKSVCKSWYRLPSDKYFTSLFNQL) enclose the F-box domain.

As to quaternary structure, part of a SCF (SKP1-cullin-F-box) protein ligase complex. Interacts with SKP1A, SKP1B, ASK11, ASK12, ASK13 and ASK14.

Its pathway is protein modification; protein ubiquitination. The polypeptide is F-box protein At5g49610 (Arabidopsis thaliana (Mouse-ear cress)).